The sequence spans 273 residues: Tryptophan synthase alpha chain (273 aa).

Active-site proton acceptor residues include glutamate 49 and aspartate 60.

The protein belongs to the TrpA family. Tetramer of two alpha and two beta chains.

It carries out the reaction (1S,2R)-1-C-(indol-3-yl)glycerol 3-phosphate + L-serine = D-glyceraldehyde 3-phosphate + L-tryptophan + H2O. It participates in amino-acid biosynthesis; L-tryptophan biosynthesis; L-tryptophan from chorismate: step 5/5. Its function is as follows. The alpha subunit is responsible for the aldol cleavage of indoleglycerol phosphate to indole and glyceraldehyde 3-phosphate. In Albidiferax ferrireducens (strain ATCC BAA-621 / DSM 15236 / T118) (Rhodoferax ferrireducens), this protein is Tryptophan synthase alpha chain.